The following is a 209-amino-acid chain: Dual specificity phosphatase 29 (209 aa).

Residues 45–193 (HVNEVWPNLY…LRELDIKLAL (149 aa)) enclose the Tyrosine-protein phosphatase domain. 137–144 (NCAMGRSR) provides a ligand contact to substrate. Cys-138 serves as the catalytic Phosphocysteine intermediate.

It belongs to the protein-tyrosine phosphatase family. Non-receptor class dual specificity subfamily.

The protein localises to the cytoplasm. It is found in the nucleus. The enzyme catalyses O-phospho-L-tyrosyl-[protein] + H2O = L-tyrosyl-[protein] + phosphate. The catalysed reaction is O-phospho-L-seryl-[protein] + H2O = L-seryl-[protein] + phosphate. It catalyses the reaction O-phospho-L-threonyl-[protein] + H2O = L-threonyl-[protein] + phosphate. Dual specificity phosphatase able to dephosphorylate phosphotyrosine, phosphoserine and phosphothreonine residues, with a preference for phosphotyrosine as a substrate. Functionally, dual specificity phosphatase able to dephosphorylate phosphotyrosine, phosphoserine and phosphothreonine residues within the same substrate, with a preference for phosphotyrosine as a substrate. Involved in the modulation of AMPK and MAPK1/2 signaling pathway. The protein is Dual specificity phosphatase 29 (dusp29) of Xenopus laevis (African clawed frog).